A 259-amino-acid chain; its full sequence is UPF0246 protein PputGB1_4560 (259 aa).

This sequence belongs to the UPF0246 family.

The chain is UPF0246 protein PputGB1_4560 from Pseudomonas putida (strain GB-1).